A 1476-amino-acid chain; its full sequence is ABC-type transporter frbG (1476 aa).

A run of 5 helical transmembrane segments spans residues 26–46 (LLFE…VLAL), 64–84 (LYYA…VQLI), 97–117 (SIAI…LCHL), 122–142 (SAKP…FDII), and 146–166 (TLWI…GLVL). Asparagine 244 carries N-linked (GlcNAc...) asparagine glycosylation. A run of 4 helical transmembrane segments spans residues 266–286 (FLAG…QPFL), 302–322 (AGAT…GIAI), 380–400 (LQTM…TWLL), and 409–429 (IPSV…AVMA). Residues 274–553 (LALTGFTFAQ…FVHSAVNLML (280 aa)) form the ABC transmembrane type-1 1 domain. Residue asparagine 464 is glycosylated (N-linked (GlcNAc...) asparagine). 2 helical membrane passes run 487–507 (CLVF…IIGF) and 533–553 (IFAL…NLML). The region spanning 619 to 845 (IQARDTNIGW…VTAHVHNQTS (227 aa)) is the ABC transporter 1 domain. Residue 652–659 (GPTNSGKS) participates in ATP binding. Residues asparagine 694, asparagine 776, asparagine 805, and asparagine 842 are each glycosylated (N-linked (GlcNAc...) asparagine). A run of 5 helical transmembrane segments spans residues 898–918 (AVFL…SIWV), 936–956 (YLLV…GGGS), 1017–1037 (LFAF…SPFV), 1121–1141 (LGLV…IVIV), and 1151–1171 (GFLG…GGFI). Residues 898 to 1179 (AVFLALCMAL…FIGGWTGLET (282 aa)) form the ABC transmembrane type-1 2 domain. One can recognise an ABC transporter 2 domain in the interval 1216–1447 (IVFDDVTASY…LSSSSPTSSP (232 aa)). An N-linked (GlcNAc...) asparagine glycan is attached at asparagine 1235. 1250 to 1257 (GRTGSGKS) is a binding site for ATP.

The protein belongs to the ABC transporter superfamily. ABCC family. Conjugate transporter (TC 3.A.1.208) subfamily.

Its subcellular location is the cell membrane. In terms of biological role, ABC-type transporter; part of the gene cluster that mediates the biosynthesis of the antifungal antibiotic FR901469, an inhibitor of beta-1,3-glucansynthase, exerting antifungal activity against the pathogenes Candida albicans and Aspergillus fumigatus. FR901469 is a cyclic depsipeptide containing 12 amino acid residues and a fatty acid chain. Probably involved in the secretion of FR901469. In Dothideomycetidae sp. (strain 11243) (Fungal sp. (strain No.11243)), this protein is ABC-type transporter frbG.